Consider the following 697-residue polypeptide: Elongation factor G (697 aa).

A tr-type G domain is found at 10-290 (THFRNIGIAA…AVVDYLPSPL (281 aa)). GTP contacts are provided by residues 19–26 (AHIDAGKT), 89–93 (DTPGH), and 143–146 (NKMD).

Belongs to the TRAFAC class translation factor GTPase superfamily. Classic translation factor GTPase family. EF-G/EF-2 subfamily.

It localises to the cytoplasm. Functionally, catalyzes the GTP-dependent ribosomal translocation step during translation elongation. During this step, the ribosome changes from the pre-translocational (PRE) to the post-translocational (POST) state as the newly formed A-site-bound peptidyl-tRNA and P-site-bound deacylated tRNA move to the P and E sites, respectively. Catalyzes the coordinated movement of the two tRNA molecules, the mRNA and conformational changes in the ribosome. The polypeptide is Elongation factor G (Deinococcus deserti (strain DSM 17065 / CIP 109153 / LMG 22923 / VCD115)).